A 187-amino-acid chain; its full sequence is RNA 2',3'-cyclic phosphodiesterase (187 aa).

His-40 acts as the Proton donor in catalysis. 2 consecutive short sequence motifs (HXTX) follow at residues 40–43 (HLTL) and 125–128 (HITI). His-125 functions as the Proton acceptor in the catalytic mechanism.

The protein belongs to the 2H phosphoesterase superfamily. ThpR family.

The enzyme catalyses a 3'-end 2',3'-cyclophospho-ribonucleotide-RNA + H2O = a 3'-end 2'-phospho-ribonucleotide-RNA + H(+). Hydrolyzes RNA 2',3'-cyclic phosphodiester to an RNA 2'-phosphomonoester. This Thermotoga maritima (strain ATCC 43589 / DSM 3109 / JCM 10099 / NBRC 100826 / MSB8) protein is RNA 2',3'-cyclic phosphodiesterase.